Here is a 456-residue protein sequence, read N- to C-terminus: 3-isopropylmalate dehydratase large subunit (456 aa).

[4Fe-4S] cluster contacts are provided by cysteine 336, cysteine 396, and cysteine 399.

It belongs to the aconitase/IPM isomerase family. LeuC type 1 subfamily. In terms of assembly, heterodimer of LeuC and LeuD. It depends on [4Fe-4S] cluster as a cofactor.

The catalysed reaction is (2R,3S)-3-isopropylmalate = (2S)-2-isopropylmalate. It participates in amino-acid biosynthesis; L-leucine biosynthesis; L-leucine from 3-methyl-2-oxobutanoate: step 2/4. Its function is as follows. Catalyzes the isomerization between 2-isopropylmalate and 3-isopropylmalate, via the formation of 2-isopropylmaleate. This is 3-isopropylmalate dehydratase large subunit from Staphylococcus aureus (strain JH1).